Here is a 443-residue protein sequence, read N- to C-terminus: MYVVPPPQRSDSGSNGDLRVYQTWKGSNIFFLQGRFVFGPDVRSLALTICLIAVPVTIFCIFVARKLIDDFSDSWGVSIVAVAVVFTIYDLILLLLTSGRDPGIIPRNAHPPEPETLDGNMDAGAGQTPQLRLPRIKEVQLNGITFKVKYCDTCMLYRPPRCSHCSICNNCVERFDHHCPWVGQCIGMRNYRFFFMFVFSTTLLCIYVFAFCWVYIRKIMESEHTTTWKAMLKTPASIVLIIYTFISMWFVGGLTVFHLYLISTNQTTYENFRYRYDRRSNPHNKGVVNNFKETFFSTIPPSKNDFRAMVQREPPLPPRSVAGGFMSPNMGKANDEIEMGRKAVWADMGPAMSDHGDGKHGNNERLHVKDGELGELSPDIRATVDEQSDRPSMHPRRSSWGRKSGSWDMSPEVMALAARVGEQNQNGGGSSSGSGLVTENRPT.

A run of 2 helical transmembrane segments spans residues 44 to 64 and 76 to 96; these read SLAL…IFVA and GVSI…LLLL. A DHHC domain is found at 149 to 199; the sequence is KYCDTCMLYRPPRCSHCSICNNCVERFDHHCPWVGQCIGMRNYRFFFMFVF. Residue Cys-179 is the S-palmitoyl cysteine intermediate of the active site. 2 helical membrane-spanning segments follow: residues 193 to 213 and 237 to 257; these read FFFM…AFCW and SIVL…LTVF. Phosphoserine is present on residues Ser-327 and Ser-377. The segment covering 382–392 has biased composition (basic and acidic residues); it reads ATVDEQSDRPS. The interval 382–443 is disordered; sequence ATVDEQSDRP…SGLVTENRPT (62 aa). Position 406 is a phosphoserine (Ser-406).

This sequence belongs to the DHHC palmitoyltransferase family.

The protein resides in the cell membrane. It catalyses the reaction L-cysteinyl-[protein] + hexadecanoyl-CoA = S-hexadecanoyl-L-cysteinyl-[protein] + CoA. Its function is as follows. Palmitoyl acyltransferase. The protein is Probable protein S-acyltransferase 7 (PAT07) of Arabidopsis thaliana (Mouse-ear cress).